A 188-amino-acid chain; its full sequence is Adenine phosphoribosyltransferase (188 aa).

It belongs to the purine/pyrimidine phosphoribosyltransferase family. In terms of assembly, homodimer.

The protein resides in the cytoplasm. It carries out the reaction AMP + diphosphate = 5-phospho-alpha-D-ribose 1-diphosphate + adenine. It functions in the pathway purine metabolism; AMP biosynthesis via salvage pathway; AMP from adenine: step 1/1. Its function is as follows. Catalyzes a salvage reaction resulting in the formation of AMP, that is energically less costly than de novo synthesis. The chain is Adenine phosphoribosyltransferase from Burkholderia cenocepacia (strain HI2424).